The following is a 332-amino-acid chain: 2,3-diketo-L-gulonate reductase (332 aa).

His-44 functions as the Proton donor in the catalytic mechanism. NAD(+) is bound by residues 168-174, 224-225, and 304-306; these read ITMVDMS, WK, and GHE.

This sequence belongs to the LDH2/MDH2 oxidoreductase family. DlgD subfamily. In terms of assembly, homodimer.

It is found in the cytoplasm. The catalysed reaction is 3-dehydro-L-gulonate + NAD(+) = 2,3-dioxo-L-gulonate + NADH + H(+). The enzyme catalyses 3-dehydro-L-gulonate + NADP(+) = 2,3-dioxo-L-gulonate + NADPH + H(+). Functionally, catalyzes the reduction of 2,3-diketo-L-gulonate in the presence of NADH, to form 3-keto-L-gulonate. This is 2,3-diketo-L-gulonate reductase from Shigella boydii serotype 4 (strain Sb227).